The following is a 161-amino-acid chain: F-box only protein 48 (161 aa).

Positions 1–25 are disordered; that stretch reads MKKTSKKNNNFKIPGTELNSADAER. Residues 32-79 form the F-box domain; sequence RNFVELLPLEVTYKIFSQLDIQSLCRASRTCTGWNCAIRNNDSLWKPH.

The protein is F-box only protein 48 (Fbxo48) of Mus musculus (Mouse).